Reading from the N-terminus, the 468-residue chain is Glutamate--tRNA ligase (468 aa).

Residues 12-22 (PSPTGFIHLGN) carry the 'HIGH' region motif. The 'KMSKS' region motif lies at 244 to 248 (KMSKR). Lys-247 is an ATP binding site.

This sequence belongs to the class-I aminoacyl-tRNA synthetase family. Glutamate--tRNA ligase type 1 subfamily. Monomer.

It is found in the cytoplasm. The catalysed reaction is tRNA(Glu) + L-glutamate + ATP = L-glutamyl-tRNA(Glu) + AMP + diphosphate. Catalyzes the attachment of glutamate to tRNA(Glu) in a two-step reaction: glutamate is first activated by ATP to form Glu-AMP and then transferred to the acceptor end of tRNA(Glu). This chain is Glutamate--tRNA ligase, found in Polynucleobacter asymbioticus (strain DSM 18221 / CIP 109841 / QLW-P1DMWA-1) (Polynucleobacter necessarius subsp. asymbioticus).